The following is a 341-amino-acid chain: Serpentine receptor class epsilon-12 (341 aa).

7 consecutive transmembrane segments (helical) span residues 30 to 50 (TAFY…LFSA), 57 to 77 (FTLV…AIIV), 101 to 121 (AMTF…FSIL), 140 to 160 (YISY…AILL), 167 to 187 (IFVV…NQFL), 230 to 250 (LNFI…SVLF), and 262 to 282 (ICSL…PQIM).

It belongs to the nematode receptor-like protein sre family.

It is found in the membrane. The chain is Serpentine receptor class epsilon-12 (sre-12) from Caenorhabditis elegans.